The primary structure comprises 258 residues: Trans-aconitate 2-methyltransferase (258 aa).

The protein belongs to the methyltransferase superfamily. Tam family.

The protein resides in the cytoplasm. The enzyme catalyses trans-aconitate + S-adenosyl-L-methionine = (E)-3-(methoxycarbonyl)pent-2-enedioate + S-adenosyl-L-homocysteine. Functionally, catalyzes the S-adenosylmethionine monomethyl esterification of trans-aconitate. The protein is Trans-aconitate 2-methyltransferase of Acidovorax ebreus (strain TPSY) (Diaphorobacter sp. (strain TPSY)).